Reading from the N-terminus, the 763-residue chain is Phosphoglycerol transferase I (763 aa).

Transmembrane regions (helical) follow at residues 1–21 (MSEL…AWKA), 26–46 (WWFA…ITLY), 77–97 (ILPG…LGWV), and 108–128 (VGYS…SPAF).

The protein belongs to the OpgB family.

The protein localises to the cell inner membrane. The enzyme catalyses a phosphatidylglycerol + a membrane-derived-oligosaccharide D-glucose = a 1,2-diacyl-sn-glycerol + a membrane-derived-oligosaccharide 6-(glycerophospho)-D-glucose.. It functions in the pathway glycan metabolism; osmoregulated periplasmic glucan (OPG) biosynthesis. In terms of biological role, transfers a phosphoglycerol residue from phosphatidylglycerol to the membrane-bound nascent glucan backbones. This chain is Phosphoglycerol transferase I, found in Salmonella dublin (strain CT_02021853).